The following is a 297-amino-acid chain: Succinate dehydrogenase [ubiquinone] iron-sulfur subunit, mitochondrial (297 aa).

The interval 33-55 is disordered; sequence TAEALSASRPPIKETKTSTVKEP. Residues 78–157 form the 2Fe-2S ferredoxin-type domain; it reads DKPRMQSYTL…ETRIYPLPHT (80 aa). [2Fe-2S] cluster is bound by residues Cys-117, Cys-122, Cys-125, and Cys-137. The 4Fe-4S ferredoxin-type domain occupies 199-229; it reads DRKKLDGLYECILCACCSTSCPSYWWNSEEY. Residues Cys-209, Cys-212, and Cys-215 each coordinate [4Fe-4S] cluster. Residue Cys-219 participates in [3Fe-4S] cluster binding. Trp-224 lines the a ubiquinone pocket. [3Fe-4S] cluster contacts are provided by Cys-266 and Cys-272. Cys-276 is a binding site for [4Fe-4S] cluster.

The protein belongs to the succinate dehydrogenase/fumarate reductase iron-sulfur protein family. As to quaternary structure, component of complex II composed of four subunits: a flavoprotein (FP), an iron-sulfur protein (IP), and a cytochrome b composed of a large and a small subunit. It depends on [2Fe-2S] cluster as a cofactor. [3Fe-4S] cluster is required as a cofactor. The cofactor is [4Fe-4S] cluster.

It localises to the mitochondrion inner membrane. The catalysed reaction is a quinone + succinate = fumarate + a quinol. It functions in the pathway carbohydrate metabolism; tricarboxylic acid cycle; fumarate from succinate (eukaryal route): step 1/1. In terms of biological role, iron-sulfur protein (IP) subunit of succinate dehydrogenase (SDH) that is involved in complex II of the mitochondrial electron transport chain and is responsible for transferring electrons from succinate to ubiquinone (coenzyme Q). The sequence is that of Succinate dehydrogenase [ubiquinone] iron-sulfur subunit, mitochondrial (SDH2) from Zymoseptoria tritici (Speckled leaf blotch fungus).